The primary structure comprises 215 residues: Probable peptidyl-prolyl cis-trans isomerase (215 aa).

A PPIase cyclophilin-type domain is found at 38 to 197 (DGIYAVMETN…RRGAAAKRFV (160 aa)).

This sequence belongs to the cyclophilin-type PPIase family.

It catalyses the reaction [protein]-peptidylproline (omega=180) = [protein]-peptidylproline (omega=0). Its function is as follows. PPIases accelerate the folding of proteins. It catalyzes the cis-trans isomerization of proline imidic peptide bonds in oligopeptides. The polypeptide is Probable peptidyl-prolyl cis-trans isomerase (ppiB) (Treponema pallidum (strain Nichols)).